Reading from the N-terminus, the 506-residue chain is Beta-glucosidase 13 (506 aa).

An N-terminal signal peptide occupies residues 1-25 (MAAAGEVVMLGGILLPLLLVVAVSG). An a beta-D-glucoside-binding site is contributed by glutamine 49. The N-linked (GlcNAc...) asparagine glycan is linked to asparagine 118. A beta-D-glucoside is bound by residues histidine 153 and 198–199 (NE). Glutamate 199 (proton donor) is an active-site residue. Cysteine 219 and cysteine 226 form a disulfide bridge. Asparagine 225 carries an N-linked (GlcNAc...) asparagine glycan. Residue tyrosine 342 participates in a beta-D-glucoside binding. N-linked (GlcNAc...) asparagine glycosylation is found at asparagine 357 and asparagine 367. Glutamate 413 contributes to the a beta-D-glucoside binding site. The active-site Nucleophile is glutamate 413. Residue asparagine 421 is glycosylated (N-linked (GlcNAc...) asparagine). A beta-D-glucoside is bound by residues tryptophan 462, 469-470 (EW), and phenylalanine 478.

This sequence belongs to the glycosyl hydrolase 1 family.

It catalyses the reaction Hydrolysis of terminal, non-reducing beta-D-glucosyl residues with release of beta-D-glucose.. This chain is Beta-glucosidase 13 (BGLU13), found in Oryza sativa subsp. japonica (Rice).